The chain runs to 369 residues: Aminomethyltransferase (369 aa).

Belongs to the GcvT family. In terms of assembly, the glycine cleavage system is composed of four proteins: P, T, L and H.

The catalysed reaction is N(6)-[(R)-S(8)-aminomethyldihydrolipoyl]-L-lysyl-[protein] + (6S)-5,6,7,8-tetrahydrofolate = N(6)-[(R)-dihydrolipoyl]-L-lysyl-[protein] + (6R)-5,10-methylene-5,6,7,8-tetrahydrofolate + NH4(+). Its function is as follows. The glycine cleavage system catalyzes the degradation of glycine. The protein is Aminomethyltransferase of Xanthomonas oryzae pv. oryzae (strain PXO99A).